The primary structure comprises 271 residues: 3-methyl-2-oxobutanoate hydroxymethyltransferase (271 aa).

Residues Asp-49 and Asp-88 each coordinate Mg(2+). Residues 49-50, Asp-88, and Lys-118 contribute to the 3-methyl-2-oxobutanoate site; that span reads DS. Glu-120 contacts Mg(2+). Residue Glu-187 is the Proton acceptor of the active site.

Belongs to the PanB family. As to quaternary structure, homodecamer; pentamer of dimers. Requires Mg(2+) as cofactor.

Its subcellular location is the cytoplasm. It carries out the reaction 3-methyl-2-oxobutanoate + (6R)-5,10-methylene-5,6,7,8-tetrahydrofolate + H2O = 2-dehydropantoate + (6S)-5,6,7,8-tetrahydrofolate. Its pathway is cofactor biosynthesis; (R)-pantothenate biosynthesis; (R)-pantoate from 3-methyl-2-oxobutanoate: step 1/2. Catalyzes the reversible reaction in which hydroxymethyl group from 5,10-methylenetetrahydrofolate is transferred onto alpha-ketoisovalerate to form ketopantoate. The protein is 3-methyl-2-oxobutanoate hydroxymethyltransferase of Bartonella bacilliformis (strain ATCC 35685 / KC583 / Herrer 020/F12,63).